The following is a 344-amino-acid chain: Sesquiterpene synthase 9 (344 aa).

Residues aspartate 88, asparagine 224, serine 228, and glutamate 232 each contribute to the Mg(2+) site. The short motif at 88 to 92 is the DDXXD motif element; it reads DEYSD. Positions 224 to 232 match the NSE/DTE motif motif; the sequence is NDMLSWNVE. (2E,6E)-farnesyl diphosphate is bound by residues arginine 313 and tyrosine 314.

Belongs to the terpene synthase family. Mg(2+) serves as cofactor.

Terpene cyclase that catalyzes the cyclization of farnesyl diphosphate (FPP) to a single major sesquiterpene scaffold whose chemical structure is still unknown. The polypeptide is Sesquiterpene synthase 9 (Postia placenta (strain ATCC 44394 / Madison 698-R) (Brown rot fungus)).